The chain runs to 111 residues: MSDTLNRLAEVLEERKQAAPDSSYVASLYHKGLNKILEKLGEESVETIIAAKDAQISKDYSDVIYETADLWFHSLVMLSALGQHPQAVLDELERRFGLSGHDEKAARQPSA.

It belongs to the PRA-PH family.

The protein localises to the cytoplasm. It catalyses the reaction 1-(5-phospho-beta-D-ribosyl)-ATP + H2O = 1-(5-phospho-beta-D-ribosyl)-5'-AMP + diphosphate + H(+). It functions in the pathway amino-acid biosynthesis; L-histidine biosynthesis; L-histidine from 5-phospho-alpha-D-ribose 1-diphosphate: step 2/9. The sequence is that of Phosphoribosyl-ATP pyrophosphatase from Pseudomonas putida (strain ATCC 700007 / DSM 6899 / JCM 31910 / BCRC 17059 / LMG 24140 / F1).